Consider the following 223-residue polypeptide: MAGISSGLEGIRAISWNTVPILKVSLGNDQVWPAFDPVLTPVTAVGAYTYNIPAQAEFIDVILLGAGGGGQGMGSATAWGQGGFGGSWVTATLRRGVDIPWAVTQITGVIGAGGTAGPGYIFGQTGAGGKGGDTTATFSGGGTLIAAGGAGGNSRKLDFGGKSPNPADMVYRDRTYDGGARQLTPSGIGYAPGGGGAAATVPVGITGLAGGPGARGQAWFLAY.

This Mycobacterium phage D29 (Mycobacteriophage D29) protein is Gene 32 protein (32).